We begin with the raw amino-acid sequence, 404 residues long: S-adenosylmethionine synthase (404 aa).

H16 is a binding site for ATP. D18 contacts Mg(2+). Residue E44 coordinates K(+). The L-methionine site is built by E57 and Q100. The tract at residues 100 to 110 (QSPEINQGVAR) is flexible loop. ATP is bound by residues 177-179 (DGK), D257, 263-264 (RK), A280, and K284. D257 is an L-methionine binding site. K288 lines the L-methionine pocket.

This sequence belongs to the AdoMet synthase family. In terms of assembly, homotetramer; dimer of dimers. Requires Mg(2+) as cofactor. It depends on K(+) as a cofactor.

It is found in the cytoplasm. It carries out the reaction L-methionine + ATP + H2O = S-adenosyl-L-methionine + phosphate + diphosphate. It functions in the pathway amino-acid biosynthesis; S-adenosyl-L-methionine biosynthesis; S-adenosyl-L-methionine from L-methionine: step 1/1. Its function is as follows. Catalyzes the formation of S-adenosylmethionine (AdoMet) from methionine and ATP. The overall synthetic reaction is composed of two sequential steps, AdoMet formation and the subsequent tripolyphosphate hydrolysis which occurs prior to release of AdoMet from the enzyme. The polypeptide is S-adenosylmethionine synthase (Bifidobacterium adolescentis (strain ATCC 15703 / DSM 20083 / NCTC 11814 / E194a)).